The chain runs to 343 residues: Heat-inducible transcription repressor HrcA (343 aa).

It belongs to the HrcA family.

In terms of biological role, negative regulator of class I heat shock genes (grpE-dnaK-dnaJ and groELS operons). Prevents heat-shock induction of these operons. This chain is Heat-inducible transcription repressor HrcA, found in Bacillus licheniformis (strain ATCC 14580 / DSM 13 / JCM 2505 / CCUG 7422 / NBRC 12200 / NCIMB 9375 / NCTC 10341 / NRRL NRS-1264 / Gibson 46).